The following is a 162-amino-acid chain: MSLGPLKFQAVGEKGEEDEEESLDSLKALTAKLQLQTRRPSYLEWTARVQSRAWYRAQARPEPVGPGAICGFDSMDSALEWLRRELQEMRAQDRQLAGQLLRLRARLHRLKVDQVCHLHQELLDEAELEMELESGTGLPLAPPLRHLGLTRMNISARRFTLC.

The protein belongs to the FAM167 (SEC) family.

This is Protein FAM167B (Fam167b) from Mus musculus (Mouse).